The chain runs to 565 residues: Urocanate hydratase (565 aa).

NAD(+) is bound by residues 58-59 (GG), Gln136, 182-184 (GMG), Glu202, Arg207, 245-246 (NA), 266-270 (QTSAH), 276-277 (YL), and Tyr325. The active site involves Cys413. Position 495 (Gly495) interacts with NAD(+).

It belongs to the urocanase family. NAD(+) is required as a cofactor.

The protein localises to the cytoplasm. The enzyme catalyses 4-imidazolone-5-propanoate = trans-urocanate + H2O. It participates in amino-acid degradation; L-histidine degradation into L-glutamate; N-formimidoyl-L-glutamate from L-histidine: step 2/3. Functionally, catalyzes the conversion of urocanate to 4-imidazolone-5-propionate. This Vibrio vulnificus (strain CMCP6) protein is Urocanate hydratase.